The following is a 238-amino-acid chain: Pre-protein VI (238 aa).

The propeptide occupies 1–33 (MDAVNFSILAPRYGSHPMMSAWSGIGTSDMNGG). The segment at 34–54 (AFNWGGIWSGIKNFGSNVKNW) is amphipathic alpha-helix essential for membrane lytic activity. The segment at 36 to 53 (NWGGIWSGIKNFGSNVKN) is involved in endosomal membrane lysis. The interaction with hexon protein stretch occupies residues 48–74 (GSNVKNWGSRAWNSQTGKLLRQKLNDT). Residues 67–76 (LRQKLNDTKV) carry the Nuclear export signal motif. A PPXY motif motif is present at residues 153–156 (PPSY). A disordered region spans residues 187–212 (TLELKPSDQPPPYSPQSSNMPVTAPV). Residues 219–230 (GTLANIVGVGLS) carry the Nuclear export signal motif. The interaction with hexon protein stretch occupies residues 221–227 (LANIVGV). The segment at 228-238 (GLSNVKRRRCF) is binds to importin alpha/beta, involved in hexon nuclear import. The Nuclear localization signal signature appears at 233-236 (KRRR).

Belongs to the adenoviridae protein VI family. In terms of assembly, interacts with hexon protein; this interaction allows nuclear import of hexon trimers and possibly pre-capsid assembly. Interacts (via C-terminal NLS) with importin alpha/beta. Interacts (via PPxY motif) with host NEDD4 ubiquitine ligase; this interaction might play a role in virus intracellular transport during entry. Part of a complex composed of the core-capsid bridging protein, the endosome lysis protein VI and the hexon-linking protein VIII; these interactions bridge the virus core to the capsid. Interacts with peripentonal hexons; this interaction stabilizes the capsid by gluing two peripentonal hexons together and joining them with an adjacent group-of-nine hexon. As to quaternary structure, heterodimer with the viral protease; disulfide-linked. Interacts with the viral protease. Ubiquitinated by Nedd4 following partial capsid disassembly; which might play a role in intracellular virus movement during entry. Post-translationally, contains the major nuclear import and export signals. Proteolytically removed during virion maturation. The processing of the C-terminus turns the precursor into a mature viral structural protein and abrogates its ability to promote hexon import and act as a potential chaperone protein.

It is found in the host nucleus. It localises to the host cytoplasm. The protein localises to the virion. During virus assembly, promotes hexon trimers nuclear import through nuclear pore complexes via an importin alpha/beta-dependent mechanism. By analogy to herpesviruses capsid assembly, might act as a chaperone to promote the formation of the icosahedral capsid. In terms of biological role, structural component of the virion that provides increased stability to the particle shell through its interaction with the core-capsid bridging protein and the hexon-linking protein VIII. Fibers shedding during virus entry into host cell allows the endosome lysis protein to be exposed as a membrane-lytic peptide. Exhibits pH-independent membrane fragmentation activity and probably mediates viral rapid escape from host endosome via organellar membrane lysis. It is not clear if it then remains partially associated with the capsid and involved in the intracellular microtubule-dependent transport of capsid to the nucleus, or if it is lost during endosomal penetration. Its function is as follows. Cofactor that activates the viral protease. Binds to viral protease in a 1:1 ratio. In Canine adenovirus serotype 1 (strain CLL) (CAdV-1), this protein is Pre-protein VI.